A 483-amino-acid polypeptide reads, in one-letter code: Galactose-3-O-sulfotransferase 4 (483 aa).

The Cytoplasmic portion of the chain corresponds to 1-18 (MGVLSPTRTMRLWGPRSL). A helical; Signal-anchor for type II membrane protein membrane pass occupies residues 19-39 (GVALGVFMTIGFALQLLGGPF). At 40–483 (QRRLPGLQLR…PLKTSRRPSP (444 aa)) the chain is on the lumenal side. The interval 225 to 248 (KRGNPHVSRDPNPPQLPSGAGPPA) is disordered. Asn-371 is a glycosylation site (N-linked (GlcNAc...) asparagine).

Belongs to the galactose-3-O-sulfotransferase family. It depends on Mn(2+) as a cofactor.

It localises to the golgi apparatus. The protein resides in the golgi stack membrane. The protein operates within protein modification; carbohydrate sulfation. Catalyzes the transfer of sulfate to beta-1,3-linked galactose residues in O-linked glycoproteins. Good substrates include asialofetuin, Gal-beta-1,3-GalNAc and Gal-beta-1,3 (GlcNAc-beta-1,6)GalNAc. This chain is Galactose-3-O-sulfotransferase 4 (GAL3ST4), found in Bos taurus (Bovine).